The primary structure comprises 84 residues: Trefoil factor 1 (84 aa).

An N-terminal signal peptide occupies residues 1–24; the sequence is MATMENKVICALVLVSMLALGTLA. The 44-residue stretch at 29-72 folds into the P-type domain; the sequence is ETCTVAPRERQNCGFPGVTPSQCANKGCCFDDTVRGVPWCFYPN. 3 disulfide bridges follow: C31/C57, C41/C56, and C51/C68.

As to quaternary structure, heterodimer with GKN2; disulfide linked. As to expression, found in stomach, with highest levels in the upper gastric mucosal cells (at protein level). Detected in goblet cells of the small and large intestine and rectum, small submucosal glands in the esophagus, mucous acini of the sublingual gland, submucosal glands of the trachea, and epithelial cells lining the exocrine pancreatic ducts but not in the remainder of the pancreas (at protein level). Scattered expression is detected in the epithelial cells of the gallbladder and submucosal glands of the vagina, and weak expression is observed in the bronchial goblet cells of the pseudostratified epithelia in the respiratory system (at protein level). Detected in urine (at protein level). Strongly expressed in breast cancer but at low levels in normal mammary tissue. It is regulated by estrogen in MCF-7 cells. Strong expression found in normal gastric mucosa and in the regenerative tissues surrounding ulcerous lesions of gastrointestinal tract, but lower expression found in gastric cancer (at protein level).

Its subcellular location is the secreted. Stabilizer of the mucous gel overlying the gastrointestinal mucosa that provides a physical barrier against various noxious agents. May inhibit the growth of calcium oxalate crystals in urine. This Homo sapiens (Human) protein is Trefoil factor 1 (TFF1).